The chain runs to 207 residues: Vexin (207 aa).

Positions 65 to 104 are disordered; it reads RDTGDRRWLQTGRLQTARPPGAHPTKTPSRPVGISEPKTS.

It belongs to the vexin family.

Its subcellular location is the cell membrane. It is found in the nucleus. Required for neurogenesis in the neural plate and retina. Strongly cooperates with neural bHLH factors to promote neurogenesis. The protein is Vexin of Mus musculus (Mouse).